Consider the following 289-residue polypeptide: MSNQNSKKHLGHTARKRFGQNFLHDMNVIHNIVSAINPKNGQFLLEIGPGLGALTEPVAEQVDKLTVVELDRDLAERLRHHPFLNHKLTIIEQDALRFNFREYFESLELREGEGVRVFGNLPYNISTPLMFHLFKFHDLIQDMHFMLQKEVVKRLCAAPNSKAYGRLTIMAQYYCQVMPVLEVPPTAFKPAPKVDSAVVRLMPHKVLPHPVKDVYWLNRVTTQAFNQRRKTLRNALSTLFSPEQLEALSIDLNARAENLSIADYARLANWLYDNPPAVDNQKEIIDEDI.

Residues N21, L23, G48, E69, D94, and N120 each coordinate S-adenosyl-L-methionine.

It belongs to the class I-like SAM-binding methyltransferase superfamily. rRNA adenine N(6)-methyltransferase family. RsmA subfamily.

It is found in the cytoplasm. It carries out the reaction adenosine(1518)/adenosine(1519) in 16S rRNA + 4 S-adenosyl-L-methionine = N(6)-dimethyladenosine(1518)/N(6)-dimethyladenosine(1519) in 16S rRNA + 4 S-adenosyl-L-homocysteine + 4 H(+). In terms of biological role, specifically dimethylates two adjacent adenosines (A1518 and A1519) in the loop of a conserved hairpin near the 3'-end of 16S rRNA in the 30S particle. May play a critical role in biogenesis of 30S subunits. In Actinobacillus pleuropneumoniae serotype 7 (strain AP76), this protein is Ribosomal RNA small subunit methyltransferase A.